Consider the following 120-residue polypeptide: Large ribosomal subunit protein uL18 (120 aa).

The protein belongs to the universal ribosomal protein uL18 family. Part of the 50S ribosomal subunit; part of the 5S rRNA/L5/L18/L25 subcomplex. Contacts the 5S and 23S rRNAs.

Functionally, this is one of the proteins that bind and probably mediate the attachment of the 5S RNA into the large ribosomal subunit, where it forms part of the central protuberance. This chain is Large ribosomal subunit protein uL18, found in Methylobacterium sp. (strain 4-46).